The sequence spans 545 residues: CTP synthase (545 aa).

The interval 1 to 266 (MTTNYIFVTG…DDYICKRFSL (266 aa)) is amidoligase domain. Serine 14 provides a ligand contact to CTP. Serine 14 is a UTP binding site. ATP contacts are provided by residues 15 to 20 (SLGKGI) and aspartate 72. 2 residues coordinate Mg(2+): aspartate 72 and glutamate 140. CTP is bound by residues 147–149 (DIE), 187–192 (KTKPTQ), and lysine 223. UTP-binding positions include 187–192 (KTKPTQ) and lysine 223. 239-241 (KDV) provides a ligand contact to ATP. Positions 291–542 (TIGMVGKYIE…VKAASEHQKR (252 aa)) constitute a Glutamine amidotransferase type-1 domain. An L-glutamine-binding site is contributed by glycine 352. Cysteine 379 functions as the Nucleophile; for glutamine hydrolysis in the catalytic mechanism. L-glutamine is bound by residues 380-383 (LGMQ), glutamate 403, and arginine 470. Catalysis depends on residues histidine 515 and glutamate 517.

This sequence belongs to the CTP synthase family. In terms of assembly, homotetramer.

The enzyme catalyses UTP + L-glutamine + ATP + H2O = CTP + L-glutamate + ADP + phosphate + 2 H(+). The catalysed reaction is L-glutamine + H2O = L-glutamate + NH4(+). It carries out the reaction UTP + NH4(+) + ATP = CTP + ADP + phosphate + 2 H(+). Its pathway is pyrimidine metabolism; CTP biosynthesis via de novo pathway; CTP from UDP: step 2/2. With respect to regulation, allosterically activated by GTP, when glutamine is the substrate; GTP has no effect on the reaction when ammonia is the substrate. The allosteric effector GTP functions by stabilizing the protein conformation that binds the tetrahedral intermediate(s) formed during glutamine hydrolysis. Inhibited by the product CTP, via allosteric rather than competitive inhibition. Catalyzes the ATP-dependent amination of UTP to CTP with either L-glutamine or ammonia as the source of nitrogen. Regulates intracellular CTP levels through interactions with the four ribonucleotide triphosphates. The sequence is that of CTP synthase from Salmonella schwarzengrund (strain CVM19633).